Here is a 130-residue protein sequence, read N- to C-terminus: Small ribosomal subunit protein uS9 (130 aa).

The protein belongs to the universal ribosomal protein uS9 family.

The protein is Small ribosomal subunit protein uS9 of Idiomarina loihiensis (strain ATCC BAA-735 / DSM 15497 / L2-TR).